Consider the following 640-residue polypeptide: MKIKVKLPDGKEKEYDRGITPAEIAKELGIKKAIGAVVNGELWDLKRPIENDCELRLVTLEDPEAPEFYRHTMAHILAQAVMRLYGKENVKLGIGPTIENGFYYDFDIKNGRLTEEDLPKIEQEMKKIIKENLPIERKEISKEEARELFRDQPYKLELIEEIEGNRVTIYRQGEFVDLCRGPHLPSTGIVKHFKLLSVSGAYWRGSEKNPMLTRVYGTAFAKKEDLDNYLKFLEEAQRRDHRKLGPQLELFMLNTEYAPGMPFFLPKGVVVLNELMKFSRELHRERGYQEIFTPLIMNEQLWKISGHWDHYAENMYFIEKDEERYAVKPMNCPGHILVYKSRTVSYRDLPLRFFEFGRVHRYERSGVLHGLMRVRSFTQDDAHIFCTPDQIEEEILGVLDLINTIYSQFGFTYRVELSTMPEDHMGDEAIWEKATTALKNALERAGLSYKVNEGEGAFYGPKIDFHIRDSIGREWQCATIQLDFMMPEKFNVTYIGPDNKEHRAVMIHRAIYGSLERFFGILIEHFAGAFPTWLAPIQVAVIPISEKHNDGAEKVARRISQEGFRVFFDNRRETLGYRIRQAQTQKIPYMIIIGDKELESGKISVRTRTGKEIKDVDPEHFVETLRNEVLSRKLELSMEG.

Residues 1-59 (MKIKVKLPDGKEKEYDRGITPAEIAKELGIKKAIGAVVNGELWDLKRPIENDCELRLVT) enclose the TGS domain. The segment at 240–531 (DHRKLGPQLE…LIEHFAGAFP (292 aa)) is catalytic. Residues C332, H383, and H508 each contribute to the Zn(2+) site.

The protein belongs to the class-II aminoacyl-tRNA synthetase family. Homodimer. Zn(2+) is required as a cofactor.

Its subcellular location is the cytoplasm. The catalysed reaction is tRNA(Thr) + L-threonine + ATP = L-threonyl-tRNA(Thr) + AMP + diphosphate + H(+). Catalyzes the attachment of threonine to tRNA(Thr) in a two-step reaction: L-threonine is first activated by ATP to form Thr-AMP and then transferred to the acceptor end of tRNA(Thr). Also edits incorrectly charged L-seryl-tRNA(Thr). This chain is Threonine--tRNA ligase, found in Thermotoga maritima (strain ATCC 43589 / DSM 3109 / JCM 10099 / NBRC 100826 / MSB8).